The sequence spans 388 residues: MAFQPTPLRVALVAGEPSGDLLGASLLGGLHAQLPASSRYYGIGGPRMTAVDFDAHWPMEKLAVRGYVEALKHIPEILRIRGELKRQLLAEPPDAFIGIDAPDFNFGLEQALRGAGIPTVHFVCPSIWAWRGGRIKKIVKAVDHMLCLFPFEPELLEKAGVAATFVGHPLADEIPLEPDMHGARIALGLPDSGPVIAVLPGSRRSEIELIGPTFFDAMALMQQREPGVRFVVPAATPALRELLQPLVDAHPLLSVTLTEGRAQVAMTAADAILVKSGTVTLEAALLKKPMVISYKVPWLTGQIMRRQGYLPYVGLPNILAGRFVVPELLQHFATPEALADATLTQLRDDANRRTLTGIFTDMHLALRQNTAQRAAEAVARVIDSRKPH.

The protein belongs to the LpxB family.

It carries out the reaction a lipid X + a UDP-2-N,3-O-bis[(3R)-3-hydroxyacyl]-alpha-D-glucosamine = a lipid A disaccharide + UDP + H(+). Its pathway is bacterial outer membrane biogenesis; LPS lipid A biosynthesis. Condensation of UDP-2,3-diacylglucosamine and 2,3-diacylglucosamine-1-phosphate to form lipid A disaccharide, a precursor of lipid A, a phosphorylated glycolipid that anchors the lipopolysaccharide to the outer membrane of the cell. The polypeptide is Lipid-A-disaccharide synthase (Burkholderia thailandensis (strain ATCC 700388 / DSM 13276 / CCUG 48851 / CIP 106301 / E264)).